We begin with the raw amino-acid sequence, 217 residues long: U exon protein (217 aa).

Disordered regions lie at residues 68-110 (SKIF…TNHG) and 170-217 (EKEA…RQGR). Polar residues predominate over residues 202-217 (GGFQQPTGANQARQGR).

Belongs to the adenoviridae U exon protein family.

The protein resides in the host nucleus. The protein localises to the host nucleoplasm. It is found in the host nucleolus. In terms of biological role, might play a role in viral replication since it is associated with viral replication centers. Seems to have an effect on DBP localization. The protein is U exon protein of Homo sapiens (Human).